A 322-amino-acid chain; its full sequence is 2-methylene-furan-3-one reductase (322 aa).

Residues Lys-59, 174–175 (GV), 197–200 (STKK), Tyr-215, Ile-253, 264–266 (FVL), 311–312 (RA), and 311–322 (RATGKVVVYPIP) each bind NADP(+). Lys-59 is a binding site for substrate.

Belongs to the zinc-containing alcohol dehydrogenase family. Quinone oxidoreductase subfamily. In terms of assembly, monomer. Post-translationally, the N-terminus is blocked.

The catalysed reaction is 4-hydroxy-2,5-dimethyl-furan-3(2H)-one + NADP(+) = 4-hydroxy-5-methyl-2-methylenefuran-3(2H)-one + NADPH + H(+). Its function is as follows. Enone oxidoreductase involved in the biosynthesis of 4-hydroxy-2,5-dimethyl-3(2H)-furanone (HDMF or furaneol), the key flavor compound in strawberries. Can use both NADH and NADPH as the electron donor. In Fragaria ananassa (Strawberry), this protein is 2-methylene-furan-3-one reductase (EO).